The chain runs to 408 residues: Secreted effector protein SseJ (408 aa).

The active-site Nucleophile is Ser151. Active-site residues include Asp381 and His384.

The protein belongs to the 'GDSL' lipolytic enzyme family. Interacts with RhoA and indirectly with SifA.

It is found in the secreted. It localises to the host cytoplasm. Functionally, effector proteins function to alter host cell physiology and promote bacterial survival in host tissues. This protein is required for endosomal tubulation and negatively regulates the formation of Salmonella-induced filaments (Sifs) in epithelial cells. Has both deacylase and esterification activities in vitro, but esterification is probably the dominant activity in host cells. Significantly contributes to cholesterol esterification, which reduces cellular cholesterol in cells and abrogates the ability of SifA to associate with cholesterol and LAMP-1 vesicles. This Salmonella typhimurium (strain LT2 / SGSC1412 / ATCC 700720) protein is Secreted effector protein SseJ (sseJ).